Here is a 340-residue protein sequence, read N- to C-terminus: Cyclic GMP-AMP synthase-like receptor 3 (340 aa).

ATP-binding positions include serine 62 and 74–76 (EAD). Residues glutamate 74, aspartate 76, and aspartate 177 each contribute to the Mg(2+) site. Residues lysine 241 and 255–259 (SYHLK) each bind ATP. Aspartate 267 and aspartate 270 together coordinate Mn(2+).

The protein belongs to the mab-21 family. Requires Mg(2+) as cofactor. Mn(2+) is required as a cofactor.

The enzyme catalyses 2 ATP = 3',3'-c-di-AMP + 2 diphosphate. Nucleotidyltransferase that catalyzes the formation of cyclic di-AMP (3',3'-c-di-AMP) from 2 molecules of ATP and plays a key role in innate immunity. Acts as a key sensor of double-stranded RNA (dsRNA), the presence of dsRNA in the cytoplasm being a danger signal that triggers the immune responses. Directly binds dsRNA, activating the nucleotidyltransferase activity, leading to synthesis of 3',3'-c-di-AMP, a second messenger that binds to and activates Sting, thereby triggering the immune response via activation of the NF-kappa-B transcription factor. The polypeptide is Cyclic GMP-AMP synthase-like receptor 3 (Stylophora pistillata (Smooth cauliflower coral)).